Consider the following 801-residue polypeptide: Glycerol-3-phosphate acyltransferase 2, mitochondrial (801 aa).

The segment at 1-24 is disordered; the sequence is MDTMLKSNPQTQQRSNHNGQETSL. At 1–305 the chain is on the cytoplasmic side; sequence MDTMLKSNPQ…PGPRLSALGQ (305 aa). Positions 180–290 are acyltransferase; the sequence is QLHKGQMKMV…SGQPLLIFLE (111 aa). The HXXXXD motif signature appears at 205 to 210; it reads HKSLLD. A helical transmembrane segment spans residues 306 to 332; sequence AWLGVVIQAVQAGIISDATLVPVAIAY. Residues 333-449 are Mitochondrial intermembrane-facing; the sequence is DLVPDAPCNM…QLLVRRLSRH (117 aa). A helical membrane pass occupies residues 450-472; it reads VLSASVASSAVMSTAIMATLLLL. At 473-801 the chain is on the cytoplasmic side; it reads KHQKGVVLSQ…EQFIRQFICS (329 aa). Residue S662 is modified to Phosphoserine. T666 carries the post-translational modification Phosphothreonine. 2 positions are modified to phosphoserine: S668 and S670.

This sequence belongs to the GPAT/DAPAT family. Interacts with PIWIL2. As to expression, highly expressed in the testis. Expressed at lower levels in the heart, liver, kidney, spleen and adipose cells. Only detected in primary spermatocytes.

It localises to the mitochondrion outer membrane. The enzyme catalyses sn-glycerol 3-phosphate + an acyl-CoA = a 1-acyl-sn-glycero-3-phosphate + CoA. It carries out the reaction a 1-acyl-sn-glycero-3-phosphate + an acyl-CoA = a 1,2-diacyl-sn-glycero-3-phosphate + CoA. The catalysed reaction is 1-(9Z-octadecenoyl)-sn-glycero-3-phosphate + (9Z)-octadecenoyl-CoA = 1,2-di-(9Z-octadecenoyl)-sn-glycero-3-phosphate + CoA. It catalyses the reaction 1-(9Z-octadecenoyl)-sn-glycero-3-phosphate + (5Z,8Z,11Z,14Z)-eicosatetraenoyl-CoA = 1-(9Z)-octadecenoyl-2-(5Z,8Z,11Z,14Z)-eicosatetraenoyl-sn-glycero-3-phosphate + CoA. The enzyme catalyses (5Z,8Z,11Z,14Z)-eicosatetraenoyl-CoA + sn-glycerol 3-phosphate = 1-(5Z,8Z,11Z,14Z-eicosatetraenoyl)-sn-glycero-3-phosphate + CoA. It functions in the pathway phospholipid metabolism; CDP-diacylglycerol biosynthesis; CDP-diacylglycerol from sn-glycerol 3-phosphate: step 1/3. With respect to regulation, inhibited by N-ethylmaleimide (NEM). In terms of biological role, transfers an acyl-group from acyl-ACP to the sn-1 position of glycerol-3-phosphate producing a lysophosphatidic acid (LPA), an essential step for the triacylglycerol (TAG) and glycerophospholipids. In vitro also transfers an acyl-group from acyl-ACP to the LPA producing a phosphatidic acid (PA). Prefers arachidonoyl-CoA as the acyl donor. Required for primary processing step during piRNA biosynthesis. Molecular mechanisms by which it promotes piRNA biosynthesis are unclear and do not involve its acyltransferase activity. This chain is Glycerol-3-phosphate acyltransferase 2, mitochondrial, found in Mus musculus (Mouse).